A 121-amino-acid chain; its full sequence is Type II secretion system protein I (121 aa).

A propeptide spans 1–6 (MNKQKG) (leader sequence). Methionine 7 is modified (N-methylmethionine). The chain crosses the membrane as a helical span at residues 7–27 (MTLLEVLVALAIFSLAGLTLL).

Belongs to the GSP I family. In terms of assembly, type II secretion is composed of four main components: the outer membrane complex, the inner membrane complex, the cytoplasmic secretion ATPase and the periplasm-spanning pseudopilus. Interacts with core component PulG. Interacts with pseudopilins PulJ and PulK. In terms of processing, cleaved by prepilin peptidase. Methylated by prepilin peptidase at the amino group of the N-terminal methionine once the leader sequence is cleaved by prepilin peptidase.

The protein resides in the cell inner membrane. In terms of biological role, component of the type II secretion system required for the energy-dependent secretion of extracellular factors such as proteases and toxins from the periplasm. Part of the pseudopilus tip complex that is critical for the recognition and binding of secretion substrates. This Klebsiella michiganensis (strain ATCC 8724 / DSM 4798 / JCM 20051 / NBRC 3318 / NRRL B-199 / KCTC 1686 / BUCSAV 143 / CCM 1901) protein is Type II secretion system protein I (pulI).